Here is a 97-residue protein sequence, read N- to C-terminus: Protein 9b (97 aa).

The region spanning 8–97 (VPPALHLVDP…PDEFVVVTAK (90 aa)) is the 9b domain.

Homodimer.

It localises to the host cytoplasmic vesicle membrane. The protein localises to the host cytoplasm. This is Protein 9b from Bat coronavirus 279/2005 (BtCoV).